The chain runs to 447 residues: UDP-N-acetyl-alpha-D-muramoyl-L-alanyl-L-glutamate epimerase (447 aa).

Belongs to the MurL family.

It catalyses the reaction UDP-N-acetyl-alpha-D-muramoyl-L-alanyl-L-glutamate + ATP + H2O = UDP-N-acetyl-alpha-D-muramoyl-L-alanyl-D-glutamate + AMP + diphosphate + H(+). The protein operates within cell wall biogenesis; peptidoglycan biosynthesis. Functionally, cell wall formation. Catalyzes epimerization of the terminal L-glutamate in UDP-N-acetyl-alpha-D-muramoyl-L-alanyl-L-glutamate. The sequence is that of UDP-N-acetyl-alpha-D-muramoyl-L-alanyl-L-glutamate epimerase from Micromonospora sp. (strain ATCC 39149 / NRRL 15099 / SCC 1413).